Here is a 626-residue protein sequence, read N- to C-terminus: Lipid-A-disaccharide synthase (626 aa).

The tract at residues 1–225 is unknown; that stretch reads MLPLYLVHVL…YKKSRLPKFH (225 aa). Residues 226–626 are lipid-A-disaccharide synthase; the sequence is SPSCFLSAGE…KEFHPKSSRA (401 aa).

In the C-terminal section; belongs to the LpxB family.

The catalysed reaction is a lipid X + a UDP-2-N,3-O-bis[(3R)-3-hydroxyacyl]-alpha-D-glucosamine = a lipid A disaccharide + UDP + H(+). The protein operates within bacterial outer membrane biogenesis; LPS lipid A biosynthesis. Condensation of UDP-2,3-diacylglucosamine and 2,3-diacylglucosamine-1-phosphate to form lipid A disaccharide, a precursor of lipid A, a phosphorylated glycolipid that anchors the lipopolysaccharide to the outer membrane of the cell. The protein is Lipid-A-disaccharide synthase (lpxB) of Chlamydia caviae (strain ATCC VR-813 / DSM 19441 / 03DC25 / GPIC) (Chlamydophila caviae).